A 37-amino-acid chain; its full sequence is Large ribosomal subunit protein bL36 (37 aa).

It belongs to the bacterial ribosomal protein bL36 family.

This Chromohalobacter salexigens (strain ATCC BAA-138 / DSM 3043 / CIP 106854 / NCIMB 13768 / 1H11) protein is Large ribosomal subunit protein bL36.